Consider the following 95-residue polypeptide: Aspartyl/glutamyl-tRNA(Asn/Gln) amidotransferase subunit C (95 aa).

The protein belongs to the GatC family. Heterotrimer of A, B and C subunits.

It catalyses the reaction L-glutamyl-tRNA(Gln) + L-glutamine + ATP + H2O = L-glutaminyl-tRNA(Gln) + L-glutamate + ADP + phosphate + H(+). The enzyme catalyses L-aspartyl-tRNA(Asn) + L-glutamine + ATP + H2O = L-asparaginyl-tRNA(Asn) + L-glutamate + ADP + phosphate + 2 H(+). Its function is as follows. Allows the formation of correctly charged Asn-tRNA(Asn) or Gln-tRNA(Gln) through the transamidation of misacylated Asp-tRNA(Asn) or Glu-tRNA(Gln) in organisms which lack either or both of asparaginyl-tRNA or glutaminyl-tRNA synthetases. The reaction takes place in the presence of glutamine and ATP through an activated phospho-Asp-tRNA(Asn) or phospho-Glu-tRNA(Gln). This is Aspartyl/glutamyl-tRNA(Asn/Gln) amidotransferase subunit C from Ruegeria pomeroyi (strain ATCC 700808 / DSM 15171 / DSS-3) (Silicibacter pomeroyi).